A 273-amino-acid chain; its full sequence is Ribosomal RNA small subunit methyltransferase A (273 aa).

6 residues coordinate S-adenosyl-L-methionine: N25, L27, G52, E73, D99, and N118.

The protein belongs to the class I-like SAM-binding methyltransferase superfamily. rRNA adenine N(6)-methyltransferase family. RsmA subfamily.

The protein localises to the cytoplasm. It catalyses the reaction adenosine(1518)/adenosine(1519) in 16S rRNA + 4 S-adenosyl-L-methionine = N(6)-dimethyladenosine(1518)/N(6)-dimethyladenosine(1519) in 16S rRNA + 4 S-adenosyl-L-homocysteine + 4 H(+). In terms of biological role, specifically dimethylates two adjacent adenosines (A1518 and A1519) in the loop of a conserved hairpin near the 3'-end of 16S rRNA in the 30S particle. May play a critical role in biogenesis of 30S subunits. This is Ribosomal RNA small subunit methyltransferase A from Novosphingobium aromaticivorans (strain ATCC 700278 / DSM 12444 / CCUG 56034 / CIP 105152 / NBRC 16084 / F199).